The primary structure comprises 80 residues: Beta-toxin KAaH1 (80 aa).

The signal sequence occupies residues 1 to 22; it reads MMKLMLFSIIVILFSLIGSIHG. In terms of domain architecture, LCN-type CS-alpha/beta spans 25 to 80; the sequence is VPGNYPLDSSDDTYLCAPLGENPFCIKICRKHGVKYGYCYAFQCWCEYLEDKNVKI. 3 disulfides stabilise this stretch: C40/C63, C49/C68, and C53/C70.

It belongs to the long (3 C-C) scorpion toxin superfamily. Sodium/Potassium channel inhibitor family. In terms of tissue distribution, expressed by the venom gland.

It localises to the secreted. Inhibits the vertebrate potassium channels Kv1.1/KCNA1 and Kv1.3/KCNA3 in vitro with an IC(50) of 5.3 nM and 50.0 nM respectively. The polypeptide is Beta-toxin KAaH1 (Androctonus australis (Sahara scorpion)).